Here is a 91-residue protein sequence, read N- to C-terminus: UPF0250 protein HCH_05838 (91 aa).

Belongs to the UPF0250 family.

The protein is UPF0250 protein HCH_05838 of Hahella chejuensis (strain KCTC 2396).